The following is a 531-amino-acid chain: MACLLPAAQTLPAGFLFLVLWASVLGDKLLVVPQDGSHWLSMKEIVEHLSERGHDIMVLVPEVNLLLGESKYYRRKIFSVTYSLEELQTRFRTFGNNHFLPGASLMGPLREYRNNMIVVDMFFSNCQSLLKDSATLSFLRENKFDALFTDPAMPCGVILAEYLNLPSVYLFRGFPCSLEHMLGQSPSPVSYVPRFYTKFSDHMTFPQRLANFIVNILENYLYYCLYSKYEIIASDLLKRDVSLPSLHQNSLWLLRYDFVFEYPRPVMPNMIFLGGINCKKKGKLTQEFEAYVNASGEHGIVVFSLGSMVSEIPEKKAMEIAEALGRIPQTVLWRYTGTRPSNLAKNTILVKWLPQNDLLGHPKTRAFITHSGSHGIYEGICNGVPMVMMPLFGDQMDNAKRMETRGAGVTLNVLEMTADDLENALKTVINNKSYKENIMRLSSLHKDRPIEPLDLAVFWVEYVMRHKGAPHLRPAAHDLTWYQYHSLDVIGFLLAIVLTVVFIVFKCCAYGCRKCFGGKGRVKKSHKSKTH.

An N-terminal signal peptide occupies residues 1–26 (MACLLPAAQTLPAGFLFLVLWASVLG). Residues Asn293 and Asn431 are each glycosylated (N-linked (GlcNAc...) asparagine). Residues 489-505 (VIGFLLAIVLTVVFIVF) traverse the membrane as a helical segment.

This sequence belongs to the UDP-glycosyltransferase family. As to expression, expressed in liver, kidney and at very low levels in colon.

Its subcellular location is the microsome. The protein resides in the endoplasmic reticulum membrane. The enzyme catalyses glucuronate acceptor + UDP-alpha-D-glucuronate = acceptor beta-D-glucuronoside + UDP + H(+). It catalyses the reaction (5Z,8Z,11Z,14Z)-eicosatetraenoate + UDP-alpha-D-glucuronate = O-[(5Z),(8Z),(11Z),(14Z)-eicosatetraenoyl]-beta-D-glucuronate + UDP. The catalysed reaction is 15-hydroxy-(5Z,8Z,11Z,13E)-eicosatetraenoate + UDP-alpha-D-glucuronate = 15-O-(beta-D-glucuronosyl)-(5Z,8Z,11Z,14Z)-eicosatetraenoate + UDP + H(+). It carries out the reaction (E)-ferulate + UDP-alpha-D-glucuronate = (E)-4-O-(beta-D-glucuronosyl)-ferulate + UDP + H(+). The enzyme catalyses (E)-ferulate + UDP-alpha-D-glucuronate = (E)-ferulic acid beta-D-glucuronate ester + UDP. Its function is as follows. UDP-glucuronosyltransferase (UGT) that catalyzes phase II biotransformation reactions in which lipophilic substrates are conjugated with glucuronic acid to facilitate their inactivation and excretion from the body. Essential for the elimination and detoxification of drugs, xenobiotics and endogenous compounds. Involved in the glucuronidation of arachidonic acid (AA) and AA-derived eicosanoids including 15-HETE and 20-HETE. Conjugates small planar phenolic molecules such as 4-nitrophenol, 1-naphthol, and 4-methylumbelliferone. The bulky phenol 4-hydroxybiphenyl, androgens and estrogens are not substrates. 2-hydroxybiphenyl is an excellent substrate. Involved in the glucuronidation of the phytochemical ferulic acid at the phenolic or the carboxylic acid group. This Mus musculus (Mouse) protein is UDP-glucuronosyltransferase 1A6.